The sequence spans 146 residues: Mitochondrial DnaJ homolog 2 (146 aa).

The J domain maps to 85–146 (EALLILDISA…LERSVLLRKR (62 aa)).

As to quaternary structure, interacts with PAM16/TIM16 and is recruited by the PAM complex.

It is found in the mitochondrion inner membrane. Plays a role in mitochondrial biogenesis and protein folding. Participates in the translocation of transit peptide-containing proteins from the inner membrane into the mitochondrial matrix in an ATP-dependent manner, probably by stimulating activity of mtHSP70 (SSC1). The protein is Mitochondrial DnaJ homolog 2 (MDJ2) of Saccharomyces cerevisiae (strain ATCC 204508 / S288c) (Baker's yeast).